The primary structure comprises 309 residues: NAD-dependent protein deacylase sirtuin-5B, mitochondrial (309 aa).

Residues 1-35 (MILLPFHTRRLVSHVYCGLKPASQNKGIALEMTRP) constitute a mitochondrion transit peptide. The region spanning 36-306 (SSNLANFREA…PPALARHETE (271 aa)) is the Deacetylase sirtuin-type domain. Residue 57 to 76 (GAGVSAESGVPTIIGAGGYW) participates in NAD(+) binding. Substrate-binding residues include Y101 and R104. Residue 139–142 (QNID) coordinates NAD(+). H157 functions as the Proton acceptor in the catalytic mechanism. The Zn(2+) site is built by C165, C168, C206, and C211. Residues 248–250 (GTS), 274–276 (NME), and C292 contribute to the NAD(+) site.

This sequence belongs to the sirtuin family. Class III subfamily. Requires Zn(2+) as cofactor.

Its subcellular location is the mitochondrion. It localises to the cytoplasm. The protein resides in the cytosol. The protein localises to the nucleus. The enzyme catalyses N(6)-malonyl-L-lysyl-[protein] + NAD(+) + H2O = 2''-O-malonyl-ADP-D-ribose + nicotinamide + L-lysyl-[protein]. It catalyses the reaction N(6)-succinyl-L-lysyl-[protein] + NAD(+) + H2O = 2''-O-succinyl-ADP-D-ribose + nicotinamide + L-lysyl-[protein]. It carries out the reaction N(6)-glutaryl-L-lysyl-[protein] + NAD(+) + H2O = 2''-O-glutaryl-ADP-D-ribose + nicotinamide + L-lysyl-[protein]. Functionally, NAD-dependent lysine demalonylase, desuccinylase and deglutarylase that specifically removes malonyl, succinyl and glutaryl groups on target proteins. Has weak NAD-dependent protein deacetylase activity; however this activity may not be physiologically relevant in vivo. This chain is NAD-dependent protein deacylase sirtuin-5B, mitochondrial (sirt5-b), found in Xenopus laevis (African clawed frog).